The chain runs to 206 residues: MSAEDTPEADADAAEESEPETARAKLFGEWDITDIEYSDPSTERYITVTPIAHTMGRHADKQFKKSEISIVERLINRLMQTDENTGKKQLATSIVTEAFELVHERTDENPIQVLVSAVENSAPREETVRLKYGGISVPKAVDVAPQRRVDQALKFLAEGVYGGSFKTTTTAAEALAQQLIGAANDDVQTYAVNQKEEKERVAAAAR.

A compositionally biased stretch (acidic residues) spans methionine 1–proline 19. Residues methionine 1–lysine 25 form a disordered region. The residue at position 2 (serine 2) is an N-acetylserine.

Belongs to the universal ribosomal protein uS7 family. Part of the 30S ribosomal subunit.

One of the primary rRNA binding proteins, it binds directly to 16S rRNA where it nucleates assembly of the head domain of the 30S subunit. Is located at the subunit interface close to the decoding center. This is Small ribosomal subunit protein uS7 from Haloarcula marismortui (strain ATCC 43049 / DSM 3752 / JCM 8966 / VKM B-1809) (Halobacterium marismortui).